The following is a 137-amino-acid chain: Large ribosomal subunit protein uL16 (137 aa).

Belongs to the universal ribosomal protein uL16 family. Part of the 50S ribosomal subunit.

Binds 23S rRNA and is also seen to make contacts with the A and possibly P site tRNAs. The sequence is that of Large ribosomal subunit protein uL16 from Pseudomonas syringae pv. tomato (strain ATCC BAA-871 / DC3000).